The following is a 530-amino-acid chain: MFS transporter PfmaC (530 aa).

The tract at residues 41-76 is disordered; it reads TTAVSDGDNQSSTMSGKTAAGDATSPASGSGSGGWF. The segment covering 42-56 has biased composition (polar residues); the sequence is TAVSDGDNQSSTMSG. The span at 59 to 69 shows a compositional bias: low complexity; that stretch reads AAGDATSPASG. Helical transmembrane passes span 165 to 182, 195 to 215, 226 to 246, 261 to 281, 324 to 344, 369 to 389, 396 to 416, 422 to 442, 456 to 476, and 493 to 513; these read YWLP…LGMY, FFIG…LGCW, ALFV…QAAL, WLFI…LFCF, IFTS…SLTV, NIPT…GFVS, GPVC…FTAW, LLMA…LLAG, AFIL…FQQL, and PSAL…IPLL.

It belongs to the major facilitator superfamily. Allantoate permease family.

It localises to the cell membrane. Its function is as follows. MFS transporter; part of the gene cluster that mediates the biosynthesis of dihydroxynaphthalene (DHN)-melanin, a bluish-green pigment forming a dark layer in the conidial wall that protects the conidia from UV radiations. This is MFS transporter PfmaC from Pestalotiopsis fici (strain W106-1 / CGMCC3.15140).